The primary structure comprises 1040 residues: Multidrug resistance protein MdtB (1040 aa).

Helical transmembrane passes span 25-45 (LLMAAILLAGIIGYRFLPVAA), 347-367 (LMLAIALVVMIIYLFLRNIPA), 369-389 (IIPGVAVPLSLIGTFAVMVFL), 396-416 (LTLMALTIATGFVVDDAIVVI), 440-460 (IGFTIISLTFSLIAVLIPLLF), 472-492 (FAVTLAVAILISAVVSLTLTP), 537-557 (WLTLSVAFATLLLSVMLWIVI), 863-883 (LGSTVWLIVAAVVAMYIVLGV), 888-908 (FIHPITILSTLPTAGVGALLA), 910-930 (IIAGSELDIIAIIGIILLIGI), 968-988 (ILMTTLAALLGALPLMLSTGV), and 998-1018 (IAMVGGLLVSQVLTLFTTPVI).

It belongs to the resistance-nodulation-cell division (RND) (TC 2.A.6) family. MdtB subfamily. In terms of assembly, part of a tripartite efflux system composed of MdtA, MdtB and MdtC. MdtB forms a heteromultimer with MdtC.

The protein resides in the cell inner membrane. The sequence is that of Multidrug resistance protein MdtB from Salmonella gallinarum (strain 287/91 / NCTC 13346).